A 412-amino-acid chain; its full sequence is CHRNA7-FAM7A fusion protein (412 aa).

The next 5 helical transmembrane spans lie at 144 to 164, 172 to 192, 205 to 225, 240 to 254, and 380 to 400; these read GLNL…VFLL, ISLG…VAEI, QYFA…VIVL, WTRV…WFLR, and LCLM…LMSA.

The protein belongs to the ligand-gated ion channel (TC 1.A.9) family. As to expression, expressed in hippocampus.

The protein localises to the membrane. This is CHRNA7-FAM7A fusion protein (CHRFAM7A) from Homo sapiens (Human).